The chain runs to 776 residues: Bifunctional lysine-specific demethylase and histidyl-hydroxylase NO66 (776 aa).

3 disordered regions span residues 1–57 (MGKK…EPKF), 87–126 (EQNG…AHKH), and 165–288 (ILDE…DDEG). Basic and acidic residues-rich tracts occupy residues 47–57 (HYKEPSKEPKF) and 98–119 (EISP…DGVA). Residues 166–204 (LDEEVEDEEIDEEEFEDEEEVEDEEGMDEDETEIDESEM) are compositionally biased toward acidic residues. Residues 206–216 (VDPKDIERCIE) are compositionally biased toward basic and acidic residues. The segment covering 217–288 (FEDVDDEDEM…EMDADSDDEG (72 aa)) has biased composition (acidic residues). A JmjC domain is found at 425–569 (QLVNPQTFDD…NLMEKVIPEA (145 aa)). Positions 468, 470, and 535 each coordinate Fe cation.

It belongs to the ROX family. NO66 subfamily. The cofactor is Fe(2+).

The protein localises to the nucleus. It catalyses the reaction N(6),N(6)-dimethyl-L-lysyl(36)-[histone H3] + 2 2-oxoglutarate + 2 O2 = L-lysyl(36)-[histone H3] + 2 formaldehyde + 2 succinate + 2 CO2. Oxygenase that can act as both a histone lysine demethylase and a ribosomal histidine hydroxylase. Specifically demethylates 'Lys-4' (H3K4me) and 'Lys-36' (H3K36me) of histone H3, thereby playing a central role in histone code. This is Bifunctional lysine-specific demethylase and histidyl-hydroxylase NO66 (jmjc-1) from Caenorhabditis briggsae.